The chain runs to 215 residues: Chaperone protein TorD (215 aa).

This sequence belongs to the TorD/DmsD family. TorD subfamily.

The protein localises to the cytoplasm. Involved in the biogenesis of TorA. Acts on TorA before the insertion of the molybdenum cofactor and, as a result, probably favors a conformation of the apoenzyme that is competent for acquiring the cofactor. This is Chaperone protein TorD from Shewanella piezotolerans (strain WP3 / JCM 13877).